A 459-amino-acid polypeptide reads, in one-letter code: Bifunctional protein GlmU (459 aa).

A pyrophosphorylase region spans residues M1 to R230. UDP-N-acetyl-alpha-D-glucosamine contacts are provided by residues L9 to G12, K23, Q73, and G78 to T79. D103 is a Mg(2+) binding site. UDP-N-acetyl-alpha-D-glucosamine contacts are provided by G140, E155, N170, and N228. A Mg(2+)-binding site is contributed by N228. The tract at residues V231–N251 is linker. The N-acetyltransferase stretch occupies residues G252 to S459. Positions 333 and 351 each coordinate UDP-N-acetyl-alpha-D-glucosamine. H363 acts as the Proton acceptor in catalysis. Y366 and N377 together coordinate UDP-N-acetyl-alpha-D-glucosamine. Acetyl-CoA is bound by residues N386–Y387, A423, and R440.

In the N-terminal section; belongs to the N-acetylglucosamine-1-phosphate uridyltransferase family. This sequence in the C-terminal section; belongs to the transferase hexapeptide repeat family. Homotrimer. Mg(2+) serves as cofactor.

The protein resides in the cytoplasm. The enzyme catalyses alpha-D-glucosamine 1-phosphate + acetyl-CoA = N-acetyl-alpha-D-glucosamine 1-phosphate + CoA + H(+). The catalysed reaction is N-acetyl-alpha-D-glucosamine 1-phosphate + UTP + H(+) = UDP-N-acetyl-alpha-D-glucosamine + diphosphate. The protein operates within nucleotide-sugar biosynthesis; UDP-N-acetyl-alpha-D-glucosamine biosynthesis; N-acetyl-alpha-D-glucosamine 1-phosphate from alpha-D-glucosamine 6-phosphate (route II): step 2/2. Its pathway is nucleotide-sugar biosynthesis; UDP-N-acetyl-alpha-D-glucosamine biosynthesis; UDP-N-acetyl-alpha-D-glucosamine from N-acetyl-alpha-D-glucosamine 1-phosphate: step 1/1. It functions in the pathway bacterial outer membrane biogenesis; LPS lipid A biosynthesis. Catalyzes the last two sequential reactions in the de novo biosynthetic pathway for UDP-N-acetylglucosamine (UDP-GlcNAc). The C-terminal domain catalyzes the transfer of acetyl group from acetyl coenzyme A to glucosamine-1-phosphate (GlcN-1-P) to produce N-acetylglucosamine-1-phosphate (GlcNAc-1-P), which is converted into UDP-GlcNAc by the transfer of uridine 5-monophosphate (from uridine 5-triphosphate), a reaction catalyzed by the N-terminal domain. In Bacillus mycoides (strain KBAB4) (Bacillus weihenstephanensis), this protein is Bifunctional protein GlmU.